We begin with the raw amino-acid sequence, 612 residues long: UvrABC system protein C (612 aa).

Positions 20–98 (THSGVYRMLD…IKQHRPKYNI (79 aa)) constitute a GIY-YIG domain. In terms of domain architecture, UVR spans 208 to 243 (SSVLEEISAKMYQASEDMEYEKAQVYRDQLVVLRKL).

The protein belongs to the UvrC family. As to quaternary structure, interacts with UvrB in an incision complex.

It is found in the cytoplasm. Functionally, the UvrABC repair system catalyzes the recognition and processing of DNA lesions. UvrC both incises the 5' and 3' sides of the lesion. The N-terminal half is responsible for the 3' incision and the C-terminal half is responsible for the 5' incision. The protein is UvrABC system protein C of Francisella tularensis subsp. holarctica (strain FTNF002-00 / FTA).